The following is a 332-amino-acid chain: tRNA dimethylallyltransferase (332 aa).

ATP is bound at residue 14-21; sequence GPTASGKT. Substrate is bound at residue 16–21; sequence TASGKT. An interaction with substrate tRNA region spans residues 39–42; it reads DSMQ. The tract at residues 312 to 332 is disordered; it reads NKRSSNHDCKRKHPRPSTREL. Positions 320 to 332 are enriched in basic residues; sequence CKRKHPRPSTREL.

The protein belongs to the IPP transferase family. As to quaternary structure, monomer. The cofactor is Mg(2+).

The catalysed reaction is adenosine(37) in tRNA + dimethylallyl diphosphate = N(6)-dimethylallyladenosine(37) in tRNA + diphosphate. Catalyzes the transfer of a dimethylallyl group onto the adenine at position 37 in tRNAs that read codons beginning with uridine, leading to the formation of N6-(dimethylallyl)adenosine (i(6)A). This is tRNA dimethylallyltransferase from Staphylococcus epidermidis (strain ATCC 35984 / DSM 28319 / BCRC 17069 / CCUG 31568 / BM 3577 / RP62A).